A 236-amino-acid chain; its full sequence is Sugar fermentation stimulation protein homolog (236 aa).

This sequence belongs to the SfsA family.

In Pseudomonas fluorescens (strain SBW25), this protein is Sugar fermentation stimulation protein homolog.